The chain runs to 511 residues: Cytochrome P450 71A6 (511 aa).

2 helical membrane-spanning segments follow: residues 1–15 and 61–77; these read ILIA…LFFL and VMQL…ASSP. N90, N96, and N167 each carry an N-linked (GlcNAc...) asparagine glycan. C450 contacts heme.

The protein belongs to the cytochrome P450 family. Heme is required as a cofactor.

The protein resides in the membrane. This Nepeta racemosa (Catmint) protein is Cytochrome P450 71A6 (CYP71A6).